The primary structure comprises 339 residues: Putative agmatine deiminase (339 aa).

Cys-331 (amidino-cysteine intermediate) is an active-site residue.

The protein belongs to the agmatine deiminase family.

The catalysed reaction is agmatine + H2O = N-carbamoylputrescine + NH4(+). The polypeptide is Putative agmatine deiminase (Streptomyces coelicolor (strain ATCC BAA-471 / A3(2) / M145)).